The chain runs to 503 residues: MKIVVTKSAVKKLEADILAFPFCSGELKKQDAGVLSDFDISAHALKDFKAESGEIVLFYSSSEGHLIARVALLGLGDGKDPDDFRKAAASLAAKAMTMNLQRIAVDCSRFGTIAEDSKKRVGKLAETFVEGCFSGSYKFDRLKSGKLDKKKDDKKVKGISELILRFDASVFADAEEGAAQGEIVGSCQLMARDLVNLPGNYLQAEDIAKAAQDSGSRNGFAVKVLRKKEMEDLAMGGLLAVNQGSTHPPTFSILDYKPEGKAKAVVALVGKGVTFDSGGISLKPSEGMGEMKSDMSGAACVIAAVEAAARLGLSLRVIGLIPATDNMPDGSAQKPGDVITTYSGITVEVGNTDAEGRLILADALTYAKQEYNPDIIIDLATLTGACIVALGYSVAGLFSNNDKLAEEIYAAGISSGEKVWRMPLWDDYDELIKSEVADVNNTGGRGAGSVTAAKFLEKFIDGHKKWAHLDIAGPAFLSKSGGKVTGGTGFGVRLLIDLLKKWA.

Residues lysine 271 and aspartate 276 each contribute to the Mn(2+) site. The active site involves lysine 283. Residues aspartate 294, aspartate 353, and glutamate 355 each coordinate Mn(2+). Arginine 357 is a catalytic residue.

The protein belongs to the peptidase M17 family. Mn(2+) serves as cofactor.

It localises to the cytoplasm. It carries out the reaction Release of an N-terminal amino acid, Xaa-|-Yaa-, in which Xaa is preferably Leu, but may be other amino acids including Pro although not Arg or Lys, and Yaa may be Pro. Amino acid amides and methyl esters are also readily hydrolyzed, but rates on arylamides are exceedingly low.. It catalyses the reaction Release of an N-terminal amino acid, preferentially leucine, but not glutamic or aspartic acids.. In terms of biological role, presumably involved in the processing and regular turnover of intracellular proteins. Catalyzes the removal of unsubstituted N-terminal amino acids from various peptides. The chain is Probable cytosol aminopeptidase from Chlorobium phaeobacteroides (strain DSM 266 / SMG 266 / 2430).